A 212-amino-acid chain; its full sequence is N-(5'-phosphoribosyl)anthranilate isomerase (212 aa).

This sequence belongs to the TrpF family.

The enzyme catalyses N-(5-phospho-beta-D-ribosyl)anthranilate = 1-(2-carboxyphenylamino)-1-deoxy-D-ribulose 5-phosphate. Its pathway is amino-acid biosynthesis; L-tryptophan biosynthesis; L-tryptophan from chorismate: step 3/5. This is N-(5'-phosphoribosyl)anthranilate isomerase from Cereibacter sphaeroides (strain ATCC 17029 / ATH 2.4.9) (Rhodobacter sphaeroides).